Consider the following 89-residue polypeptide: Cell division protein ZapA (89 aa).

The protein belongs to the ZapA family. Type 2 subfamily. In terms of assembly, homodimer. Interacts with FtsZ.

The protein localises to the cytoplasm. In terms of biological role, activator of cell division through the inhibition of FtsZ GTPase activity, therefore promoting FtsZ assembly into bundles of protofilaments necessary for the formation of the division Z ring. It is recruited early at mid-cell but it is not essential for cell division. This Bacillus mycoides (strain KBAB4) (Bacillus weihenstephanensis) protein is Cell division protein ZapA.